Consider the following 577-residue polypeptide: Arginine--tRNA ligase (577 aa).

A 'HIGH' region motif is present at residues Pro-122 to His-132.

It belongs to the class-I aminoacyl-tRNA synthetase family. As to quaternary structure, monomer.

It localises to the cytoplasm. The enzyme catalyses tRNA(Arg) + L-arginine + ATP = L-arginyl-tRNA(Arg) + AMP + diphosphate. This is Arginine--tRNA ligase from Salmonella gallinarum (strain 287/91 / NCTC 13346).